The chain runs to 572 residues: Hsp70-Hsp90 organizing protein 1 (572 aa).

TPR repeat units lie at residues 2 to 35, 37 to 69, and 70 to 103; these read AEEA…APTN, VLFS…KPYW, and PKGY…DPTN. Residues 133-172 form the STI1 1 domain; it reads GPEMWTKLTSDPSTRGFLQQPDFVNMMQEIQKNPSSLNLY. Phosphoserine is present on Ser167. The tract at residues 189–248 is disordered; sequence KFRPPPPQGDEAEVPESDMGQSSSNEPEVEKKREPEPEPEPEVTEEKEKKERKEKAKKEK. Over residues 232 to 248 the composition is skewed to basic and acidic residues; that stretch reads TEEKEKKERKEKAKKEK. Positions 241–258 match the Bipartite nuclear localization signal motif; that stretch reads KEKAKKEKELGNAAYKKK. 7 TPR repeats span residues 244 to 277, 279 to 311, 319 to 356, 358 to 382, 383 to 416, 418 to 450, and 451 to 484; these read AKKE…DDED, SYLT…GREL, ARAL…HRNP, TLKR…DPKL, GDEE…NPND, KAYS…DPTF, and SKGY…DPSN. The 40-residue stretch at 521–560 folds into the STI1 2 domain; sequence DPEIQNILTDPVMRQVLSDLQENPSAAQKHMQNPMVMNKI.

As to quaternary structure, co-chaperone that forms a complex with HSP70 and HSP90 and preproteins (e.g. chloroplast preproteins). Phosphorylated. Post-translationally, acetylated.

It is found in the cytoplasm. The protein localises to the nucleus. Its function is as follows. Mediates the association of the molecular chaperones HSP70 and HSP90. Mediates nuclear encoded chloroplast preproteins binding to HSP90 prior to chloroplastic sorting. The sequence is that of Hsp70-Hsp90 organizing protein 1 (HOP1) from Arabidopsis thaliana (Mouse-ear cress).